Here is a 300-residue protein sequence, read N- to C-terminus: Sulfate adenylyltransferase subunit 2 (300 aa).

It belongs to the PAPS reductase family. CysD subfamily. In terms of assembly, heterodimer composed of CysD, the smaller subunit, and CysN.

The enzyme catalyses sulfate + ATP + H(+) = adenosine 5'-phosphosulfate + diphosphate. It participates in sulfur metabolism; hydrogen sulfide biosynthesis; sulfite from sulfate: step 1/3. Its function is as follows. With CysN forms the ATP sulfurylase (ATPS) that catalyzes the adenylation of sulfate producing adenosine 5'-phosphosulfate (APS) and diphosphate, the first enzymatic step in sulfur assimilation pathway. APS synthesis involves the formation of a high-energy phosphoric-sulfuric acid anhydride bond driven by GTP hydrolysis by CysN coupled to ATP hydrolysis by CysD. This chain is Sulfate adenylyltransferase subunit 2, found in Magnetococcus marinus (strain ATCC BAA-1437 / JCM 17883 / MC-1).